We begin with the raw amino-acid sequence, 79 residues long: RNA-binding protein KhpA (79 aa).

In terms of domain architecture, KH spans 30 to 79 (GRVLEVRVHPDDLGKVIGRNGRTARALRTVVGAIGGRGVRVDLVDVDHVR).

It belongs to the KhpA RNA-binding protein family.

The protein resides in the cytoplasm. Its subcellular location is the nucleoid. In terms of biological role, a probable RNA-binding protein. The protein is RNA-binding protein KhpA of Streptomyces coelicolor (strain ATCC BAA-471 / A3(2) / M145).